The primary structure comprises 447 residues: Na(+)-translocating NADH-quinone reductase subunit A (447 aa).

The protein belongs to the NqrA family. Composed of six subunits; NqrA, NqrB, NqrC, NqrD, NqrE and NqrF.

The catalysed reaction is a ubiquinone + n Na(+)(in) + NADH + H(+) = a ubiquinol + n Na(+)(out) + NAD(+). NQR complex catalyzes the reduction of ubiquinone-1 to ubiquinol by two successive reactions, coupled with the transport of Na(+) ions from the cytoplasm to the periplasm. NqrA to NqrE are probably involved in the second step, the conversion of ubisemiquinone to ubiquinol. The sequence is that of Na(+)-translocating NADH-quinone reductase subunit A from Yersinia pestis.